Consider the following 369-residue polypeptide: Anhydro-N-acetylmuramic acid kinase (369 aa).

12-19 (GTSLDGVD) lines the ATP pocket.

This sequence belongs to the anhydro-N-acetylmuramic acid kinase family.

It carries out the reaction 1,6-anhydro-N-acetyl-beta-muramate + ATP + H2O = N-acetyl-D-muramate 6-phosphate + ADP + H(+). It functions in the pathway amino-sugar metabolism; 1,6-anhydro-N-acetylmuramate degradation. It participates in cell wall biogenesis; peptidoglycan recycling. Its function is as follows. Catalyzes the specific phosphorylation of 1,6-anhydro-N-acetylmuramic acid (anhMurNAc) with the simultaneous cleavage of the 1,6-anhydro ring, generating MurNAc-6-P. Is required for the utilization of anhMurNAc either imported from the medium or derived from its own cell wall murein, and thus plays a role in cell wall recycling. The chain is Anhydro-N-acetylmuramic acid kinase from Actinobacillus pleuropneumoniae serotype 5b (strain L20).